A 213-amino-acid chain; its full sequence is Orotate phosphoribosyltransferase (213 aa).

K26 lines the 5-phospho-alpha-D-ribose 1-diphosphate pocket. Residue 34–35 participates in orotate binding; the sequence is FF. 5-phospho-alpha-D-ribose 1-diphosphate-binding positions include 72–73, R99, K100, K103, H105, and 124–132; these read YK and DDVITAGTA. Residues T128 and R156 each contribute to the orotate site.

It belongs to the purine/pyrimidine phosphoribosyltransferase family. PyrE subfamily. As to quaternary structure, homodimer. Mg(2+) serves as cofactor.

It carries out the reaction orotidine 5'-phosphate + diphosphate = orotate + 5-phospho-alpha-D-ribose 1-diphosphate. Its pathway is pyrimidine metabolism; UMP biosynthesis via de novo pathway; UMP from orotate: step 1/2. Catalyzes the transfer of a ribosyl phosphate group from 5-phosphoribose 1-diphosphate to orotate, leading to the formation of orotidine monophosphate (OMP). The polypeptide is Orotate phosphoribosyltransferase (Shigella flexneri).